Reading from the N-terminus, the 235-residue chain is STARD3 N-terminal-like protein (235 aa).

The residue at position 1 (methionine 1) is an N-acetylmethionine. The tract at residues 1–20 (MNHLPEHMENTLTGSQSSHA) is disordered. Residues 1 to 53 (MNHLPEHMENTLTGSQSSHASLRDIHSINPAQLMARIESYEGREKKGISDVRR) are Cytoplasmic-facing. Residues 10–20 (NTLTGSQSSHA) show a composition bias toward polar residues. Phosphoserine is present on residues serine 15, serine 21, and serine 27. Positions 48 to 218 (ISDVRRTFCL…YSPPESEAGS (171 aa)) constitute an MENTAL domain. Residues 54-74 (TFCLFVTFDLLFVTLLWIIEL) form a helical membrane-spanning segment. Residues 75-97 (NVNGGIENTLKKEVIHYDYYSSY) are Extracellular-facing. Residues 98 to 118 (FDIFLLAVFRFKVLILGYAVC) traverse the membrane as a helical segment. At 119-122 (RLRH) the chain is on the cytoplasmic side. A helical transmembrane segment spans residues 123–143 (WWAIALTTAVTSAFLLAKVIL). Residues 144–150 (SKLFSQG) are Extracellular-facing. The chain crosses the membrane as a helical span at residues 151-171 (AFGYVLPIISFILAWIETWFL). The Cytoplasmic segment spans residues 172–235 (DFKVLPQEAE…QESEKPLLEL (64 aa)). At serine 193 the chain carries Phosphoserine. The interval 202 to 235 (GLSDGQFYSPPESEAGSEEEAEEKQESEKPLLEL) is disordered. The short motif at 208 to 213 (FYSPPE) is the FFAT element. Residues 225 to 235 (KQESEKPLLEL) show a composition bias toward basic and acidic residues.

Belongs to the STARD3 family. In terms of assembly, homodimer. Interacts (via the MENTAL domain) with STARD3NL. Interacts (via FFAT motif) with VAPA. Interacts (via FFAT motif) with VAPB. Interacts (via FFAT motif) with MOSPD2 (via MSP domain).

The protein localises to the late endosome membrane. Functionally, tethering protein that creates contact site between the endoplasmic reticulum and late endosomes: localizes to late endosome membranes and contacts the endoplasmic reticulum via interaction with VAPA and VAPB. This Mus musculus (Mouse) protein is STARD3 N-terminal-like protein.